A 666-amino-acid chain; its full sequence is Sodium/potassium/calcium exchanger 2 (666 aa).

Residues 1 to 38 are Cytoplasmic-facing; it reads MDLHQSPTARLLQKWCSHESPFGCRRHYNSRKKLKLIR. Residues 39–59 form a helical membrane-spanning segment; it reads VIGLVMGLVAVSTVPFSISAF. Residues 60 to 133 lie on the Extracellular side of the membrane; the sequence is TETDSQSNRG…DIFSLEERRK (74 aa). Positions 63–122 are disordered; sequence DSQSNRGEASDMSGPRVAQGHRQRTLLDLNDKIRDYTPQPPASQEDQAENSTEHTQGDYP. Residue N112 is glycosylated (N-linked (GlcNAc...) asparagine). Positions 113–122 are enriched in basic and acidic residues; it reads STEHTQGDYP. Residues 134 to 154 traverse the membrane as a helical segment; the sequence is GAIILHVIGMIYMFIALAIVC. At 155-179 the chain is on the cytoplasmic side; that stretch reads DEFFVPSLTVITEKLGISDDVAGAT. The Alpha-1 repeat unit spans residues 175 to 215; that stretch reads VAGATFMAAGGSAPELFTSLIGVFIAHSNVGIGTIVGSAVF. A helical membrane pass occupies residues 180-200; sequence FMAAGGSAPELFTSLIGVFIA. Over 201–205 the chain is Extracellular; that stretch reads HSNVG. A helical transmembrane segment spans residues 206-226; sequence IGTIVGSAVFNILFVIGMCAL. The Cytoplasmic portion of the chain corresponds to 227 to 237; the sequence is FSREILNLTWW. A helical transmembrane segment spans residues 238 to 258; sequence PLFRDVSFYIVDLLMLITFFL. At 259-260 the chain is on the extracellular side; it reads DN. A helical membrane pass occupies residues 261-281; sequence VIMWWESLLLLTAYFAYVVFM. Residues 282 to 502 lie on the Cytoplasmic side of the membrane; the sequence is KFNVQVERWV…PDVRKPASRK (221 aa). The disordered stretch occupies residues 311–336; the sequence is KSPTAGDKDGPTLPSKPRLQRGGSSA. A phosphoserine mark is found at S337 and S341. The tract at residues 397-467 is disordered; that stretch reads VDENERQNGA…EEDDQPLSLS (71 aa). A compositionally biased stretch (polar residues) spans 416-442; it reads PNSTSTEVEMTPSSEASEPVQNGNLSH. Residues 503-523 form a helical membrane-spanning segment; it reads FFPITFFGSITWIAVFSYLMV. The Extracellular segment spans residues 524–538; it reads WWAHQVGETIGISEE. The helical transmembrane segment at 539–559 threads the bilayer; the sequence is IMGLTILAAGTSIPDLITSVI. The stretch at 546–577 is one Alpha-2 repeat; it reads AAGTSIPDLITSVIVARKGLGDMAVSSSVGSN. Residues 560–574 are Cytoplasmic-facing; it reads VARKGLGDMAVSSSV. Residues 575 to 595 traverse the membrane as a helical segment; it reads GSNIFDITVGLPLPWLLYTII. The Extracellular segment spans residues 596 to 607; the sequence is HRFSPVTVSSNG. A helical membrane pass occupies residues 608 to 628; it reads LFCAIVLLFIMLLFVILSIAL. The Cytoplasmic segment spans residues 629–635; it reads CKWRMNK. Residues 636-656 form a helical membrane-spanning segment; sequence ILGFIMFGLYFVFLVVSVLLE. The Extracellular portion of the chain corresponds to 657–666; that stretch reads DKVLVCPVSI.

Belongs to the Ca(2+):cation antiporter (CaCA) (TC 2.A.19) family. SLC24A subfamily.

The protein resides in the cell membrane. It carries out the reaction Ca(2+)(out) + K(+)(out) + 4 Na(+)(in) = Ca(2+)(in) + K(+)(in) + 4 Na(+)(out). Functionally, calcium, potassium:sodium antiporter that transports 1 Ca(2+) and 1 K(+) in exchange for 4 Na(+). Required for learming and memory by regulating neuronal Ca(2+), which is essential for the development of synaptic plasticity. This Mus musculus (Mouse) protein is Sodium/potassium/calcium exchanger 2.